The chain runs to 142 residues: Large ribosomal subunit protein uL11 (142 aa).

It belongs to the universal ribosomal protein uL11 family. Part of the ribosomal stalk of the 50S ribosomal subunit. Interacts with L10 and the large rRNA to form the base of the stalk. L10 forms an elongated spine to which L12 dimers bind in a sequential fashion forming a multimeric L10(L12)X complex. In terms of processing, one or more lysine residues are methylated.

Functionally, forms part of the ribosomal stalk which helps the ribosome interact with GTP-bound translation factors. The chain is Large ribosomal subunit protein uL11 from Shewanella frigidimarina (strain NCIMB 400).